The primary structure comprises 298 residues: HTH-type transcriptional regulator TsaR (298 aa).

One can recognise an HTH lysR-type domain in the interval 1–58 (MKLQTLQALICIEEVGSLRAAAQLLHLSQPALSAAIQQLEDELKAPLLVRTKRGVSLT). The segment at residues 18–37 (LRAAAQLLHLSQPALSAAIQ) is a DNA-binding region (H-T-H motif). Positions 98 and 100 each coordinate toluene-4-sulfonate.

This sequence belongs to the LysR transcriptional regulatory family. In terms of assembly, homotetramer. Dimer of dimers related by a twofold axis.

Sensitive to oxygen. In terms of biological role, regulates expression of the tsaMBCD1 operon and of tsaT in response to p-toluenesulfonate (TSA). Acts by binding directly to the promoter region. Binding to the tsa promoter depends on TSA concentration. This Comamonas testosteroni (Pseudomonas testosteroni) protein is HTH-type transcriptional regulator TsaR (tsaR).